The chain runs to 83 residues: MSSGGLLLLLGLLTLWEVLTPVSSKDRPRFCELPADPGPCNGLFQAFYYNPVQRKCLKFRYGGCKGNPNTFKTIEECKRTCAA.

The signal sequence occupies residues methionine 1–serine 24. Residues cysteine 31 to cysteine 81 enclose the BPTI/Kunitz inhibitor domain. Disulfide bonds link cysteine 31/cysteine 81, cysteine 40/cysteine 64, and cysteine 56/cysteine 77.

It belongs to the venom Kunitz-type family. In terms of tissue distribution, expressed by the venom gland.

It localises to the secreted. Functionally, specifically inhibits MMP2 activity (EC(50)=100 nM and Ki=60 nM). The protein is Kunitz serine protease inhibitor Pr-mulgin 1 of Pseudechis rossignolii (Papuan pigmy mulga snake).